We begin with the raw amino-acid sequence, 662 residues long: MNQFKVISKFNPTGDQPKAIKSIAKGIEKGEKFQTLIGVTGSGKTFTMANIIEKAQKPTLVLAHNKTLAAQLCSEFREFFPNNAVEYFVSYYDYYQPEAYVAQSDTYIEKDASINDEIDKLRHSATSALFERKDVIIVASVSCIYGLGNPEEYKKLTISLREGMEKDRDEIIKKLVEIQYERNDIDFSRGTFRVKGDVLDIFPASSSSKAIRVEFFGDEIDRIKEFDVLTGETITKLKHISIFPASHFATSKDRLEIAIKNIEEELEERVKELVSQDKILEAQRLKQRTNFDIEMMREVGYCTGIENYSRVLDGRAKGTPPQTLLDYFPQDFLLFIDESHVTLPQVKAMQAGDKSRKDSLVEYGFRLPCAYDNRPLTFKEFENKLNQIVFVSATPAKYELEYSTNTAEQVIRPTGLLDPEIIVKPVKGQIDDLYTSIQETIKKGFRILVTTLTKKMAEDLTDYLKEMGVKTRYLHSDIDTIERMKIIHDLRKGEFHVLVGINLLREGLDIPEVALVTILDADKEGFLRSETSLIQTVGRAARNSESKVIMYGDVITKSMEKTIKETNRRRKIQMEYNEKHGIVPKTIIKDIREVIQISDIAEERKEYDNLNEALKSYNNDIDKLIEKYEEEMREAAQNLQFEKAAHLRDVIYKLKRDKETEL.

Residues 25 to 182 (KGIEKGEKFQ…KKLVEIQYER (158 aa)) form the Helicase ATP-binding domain. An ATP-binding site is contributed by 38 to 45 (GVTGSGKT). Positions 91–114 (YYDYYQPEAYVAQSDTYIEKDASI) match the Beta-hairpin motif. The region spanning 429–595 (QIDDLYTSIQ…TIIKDIREVI (167 aa)) is the Helicase C-terminal domain. Residues 622 to 657 (DKLIEKYEEEMREAAQNLQFEKAAHLRDVIYKLKRD) form the UVR domain.

It belongs to the UvrB family. As to quaternary structure, forms a heterotetramer with UvrA during the search for lesions. Interacts with UvrC in an incision complex.

The protein localises to the cytoplasm. Functionally, the UvrABC repair system catalyzes the recognition and processing of DNA lesions. A damage recognition complex composed of 2 UvrA and 2 UvrB subunits scans DNA for abnormalities. Upon binding of the UvrA(2)B(2) complex to a putative damaged site, the DNA wraps around one UvrB monomer. DNA wrap is dependent on ATP binding by UvrB and probably causes local melting of the DNA helix, facilitating insertion of UvrB beta-hairpin between the DNA strands. Then UvrB probes one DNA strand for the presence of a lesion. If a lesion is found the UvrA subunits dissociate and the UvrB-DNA preincision complex is formed. This complex is subsequently bound by UvrC and the second UvrB is released. If no lesion is found, the DNA wraps around the other UvrB subunit that will check the other stand for damage. The protein is UvrABC system protein B of Clostridium botulinum (strain 657 / Type Ba4).